A 511-amino-acid polypeptide reads, in one-letter code: 2-isopropylmalate synthase (511 aa).

The Pyruvate carboxyltransferase domain occupies 5–267 (IQIFDTTLRD…QTQINLEETK (263 aa)). Mn(2+) is bound by residues Asp-14, His-202, His-204, and Asn-238. The segment at 391-511 (KVETLQLQFV…NTKVEEGIHS (121 aa)) is regulatory domain.

Belongs to the alpha-IPM synthase/homocitrate synthase family. LeuA type 1 subfamily. As to quaternary structure, homodimer. Mn(2+) is required as a cofactor.

The protein resides in the cytoplasm. It carries out the reaction 3-methyl-2-oxobutanoate + acetyl-CoA + H2O = (2S)-2-isopropylmalate + CoA + H(+). It functions in the pathway amino-acid biosynthesis; L-leucine biosynthesis; L-leucine from 3-methyl-2-oxobutanoate: step 1/4. In terms of biological role, catalyzes the condensation of the acetyl group of acetyl-CoA with 3-methyl-2-oxobutanoate (2-ketoisovalerate) to form 3-carboxy-3-hydroxy-4-methylpentanoate (2-isopropylmalate). The polypeptide is 2-isopropylmalate synthase (Staphylococcus saprophyticus subsp. saprophyticus (strain ATCC 15305 / DSM 20229 / NCIMB 8711 / NCTC 7292 / S-41)).